The sequence spans 411 residues: Methylthioribose-1-phosphate isomerase (411 aa).

D284 serves as the catalytic Proton donor.

It belongs to the eIF-2B alpha/beta/delta subunits family. MtnA subfamily.

It localises to the cytoplasm. Its subcellular location is the nucleus. The enzyme catalyses 5-(methylsulfanyl)-alpha-D-ribose 1-phosphate = 5-(methylsulfanyl)-D-ribulose 1-phosphate. The protein operates within amino-acid biosynthesis; L-methionine biosynthesis via salvage pathway; L-methionine from S-methyl-5-thio-alpha-D-ribose 1-phosphate: step 1/6. Catalyzes the interconversion of methylthioribose-1-phosphate (MTR-1-P) into methylthioribulose-1-phosphate (MTRu-1-P). The protein is Methylthioribose-1-phosphate isomerase of Komagataella phaffii (strain GS115 / ATCC 20864) (Yeast).